The sequence spans 259 residues: Pyrroloquinoline-quinone synthase (259 aa).

It belongs to the PqqC family.

It carries out the reaction 6-(2-amino-2-carboxyethyl)-7,8-dioxo-1,2,3,4,7,8-hexahydroquinoline-2,4-dicarboxylate + 3 O2 = pyrroloquinoline quinone + 2 H2O2 + 2 H2O + H(+). It participates in cofactor biosynthesis; pyrroloquinoline quinone biosynthesis. Its function is as follows. Ring cyclization and eight-electron oxidation of 3a-(2-amino-2-carboxyethyl)-4,5-dioxo-4,5,6,7,8,9-hexahydroquinoline-7,9-dicarboxylic-acid to PQQ. The polypeptide is Pyrroloquinoline-quinone synthase (Bradyrhizobium sp. (strain ORS 278)).